The primary structure comprises 154 residues: Large ribosomal subunit protein bL17 (154 aa).

The tract at residues Thr-127 to Glu-154 is disordered. Residues Lys-141–Glu-154 show a composition bias toward basic and acidic residues.

This sequence belongs to the bacterial ribosomal protein bL17 family. In terms of assembly, part of the 50S ribosomal subunit. Contacts protein L32.

The sequence is that of Large ribosomal subunit protein bL17 from Chlorobaculum parvum (strain DSM 263 / NCIMB 8327) (Chlorobium vibrioforme subsp. thiosulfatophilum).